Consider the following 254-residue polypeptide: Proline-rich protein 23A3 (254 aa).

Disordered regions lie at residues 1-50 (MLRT…LEAP), 161-196 (ASPPDDQANGNFSSIPGVPSPLSQDQVPGPSTGAEQ), and 212-254 (PFPG…LVYE). Residues 35 to 50 (EPACPEPLAQPELEAP) are compositionally biased toward low complexity. Pro residues predominate over residues 214–241 (PGSPLQPLPPSPSRNPQEQLPPCPPCSP). The segment covering 243–254 (APRRARKRLVYE) has biased composition (basic residues).

The protein belongs to the PRR23 family.

The sequence is that of Proline-rich protein 23A3 from Mus musculus (Mouse).